The sequence spans 398 residues: Acetate kinase 1 (398 aa).

Asparagine 9 provides a ligand contact to Mg(2+). Lysine 16 lines the ATP pocket. Substrate is bound at residue arginine 89. Residue aspartate 146 is the Proton donor/acceptor of the active site. ATP contacts are provided by residues 206–210, 281–283, and 329–333; these read HLGNG, DCR, and GIGEN. Glutamate 384 provides a ligand contact to Mg(2+).

Belongs to the acetokinase family. Homodimer. Requires Mg(2+) as cofactor. Mn(2+) serves as cofactor.

Its subcellular location is the cytoplasm. The catalysed reaction is acetate + ATP = acetyl phosphate + ADP. Its pathway is metabolic intermediate biosynthesis; acetyl-CoA biosynthesis; acetyl-CoA from acetate: step 1/2. Functionally, catalyzes the formation of acetyl phosphate from acetate and ATP. Can also catalyze the reverse reaction. The sequence is that of Acetate kinase 1 from Aliivibrio fischeri (strain ATCC 700601 / ES114) (Vibrio fischeri).